Consider the following 453-residue polypeptide: MVSNGISNGTNGTNGTTTNGTNGVNGHAALSPLEVLVQDLNKNTTTLNGYLRANKLPEPSFERDAPIINLSPDAPEEAQVAKEKVLDSALQIFQLVSGPGEYLQNVITGYHYMEILRWMSHFKIFELVPLEGKISYTELASKAGVAELRLKTLARMGMTNHLFAEPEPGFIAHSATSAALVTNNRFSDQRVWMTSIIAPVIASMVTAHERWPDSTAPNKAAFNAAFNTDLRMYEYISKQPDVYKLFGRVMDAIATSPKSDLKHLVSGFDWAGLGKANVVDIGGNIGHSCVKLAEAFPDLNFIIQDIPHVVEEGAKVIKENNEASIANRIQFQEYDFFQKQPVVGADIYLLRQIFHNWDFENSVKILKNTVESMGQNSHVLIMDFVVPEPGTVSSVNERVLRSRDVGMMQLFNSLERDLEGWKAILEAVDSRLKINAVNTPYGSFMSVIDVVLG.

Residues 1–25 (MVSNGISNGTNGTNGTTTNGTNGVN) form a disordered region. Over residues 8–25 (NGTNGTNGTTTNGTNGVN) the composition is skewed to low complexity. Residue Asp-305 participates in S-adenosyl-L-methionine binding. The active-site Proton acceptor is His-355.

Belongs to the class I-like SAM-binding methyltransferase superfamily. Cation-independent O-methyltransferase family. COMT subfamily.

The protein operates within secondary metabolite biosynthesis. O-methyltransferase; part of the gene cluster that mediates the biosynthesis of bikaverin, a red pigment also considered as a mycotoxin. The first stage is catalyzed by the polyketide synthase bik1, which catalyzes the formation of the intermediate SMA76a also knowm as pre-bikaverin. FAD-dependent monooxygenase bik2 might then be responsible for the oxidation of pre-bikaverin to oxo-pre-bikaverin which is in turn methylated by the O-methyltransferase bik3 to me-oxo-pre-bikaverin. A further cycle of oxydation and methylation by bik2 and bik3 leads to the final product of bikaverin, via a nor-bikaverin intermediate. This Gibberella fujikuroi (strain CBS 195.34 / IMI 58289 / NRRL A-6831) (Bakanae and foot rot disease fungus) protein is O-methyltransferase bik3.